The chain runs to 155 residues: Ribosome maturation factor RimP (155 aa).

The protein belongs to the RimP family.

The protein resides in the cytoplasm. Its function is as follows. Required for maturation of 30S ribosomal subunits. This Synechococcus sp. (strain CC9902) protein is Ribosome maturation factor RimP.